We begin with the raw amino-acid sequence, 34 residues long: ASCRTPKDCADPCRKETGCPYGKCMNRKCKCNRC.

Disulfide bonds link Cys-3–Cys-24, Cys-9–Cys-29, Cys-13–Cys-31, and Cys-19–Cys-34. At Cys-34 the chain carries Cysteine amide.

It belongs to the short scorpion toxin superfamily. Potassium channel inhibitor family. Alpha-KTx 06 subfamily. Post-translationally, amidated. The amidated toxin shows 5-fold more affinity for Kv1.3/KCNA3 than the synthetic carboxylated form. In terms of tissue distribution, expressed by the venom gland.

It localises to the secreted. Functionally, potently blocks voltage-gated potassium channels Kv1.1/KCNA1 (IC(50)=7-11 nM) and Kv1.3/KCNA3 (IC(50)=11-29 pM). Also mildly blocks intermediate (IK) conductance calcium-activated potassium channels (KCa3.1/KCNN4) and ERG1/Kv11.1/KCNH2. Shows ability to suppress proliferation of lymphocytes, which are known to be sensitive to Kv1.3/KCNA3 homotetrameric channel block. This Heterometrus spinifer (Asia giant forest scorpion) protein is Potassium channel toxin alpha-KTx 6.3.